We begin with the raw amino-acid sequence, 1338 residues long: Nonribosomal peptide synthetase astA (1338 aa).

Residues 22-52 (IAVVSGDIPSPHPKNEPSQTSTLHIPRDSDL) are disordered. The adenylation stretch occupies residues 271-681 (FQARCRQNPS…GRKGAEVKLR (411 aa)). The Carrier domain occupies 820–893 (TPVEIIIHDA…SLAEKCSAGG (74 aa)). Residue Ser-854 is modified to O-(pantetheine 4'-phosphoryl)serine. A condensation region spans residues 949 to 1336 (TFIFRLSGPV…IIRFLDSPDS (388 aa)).

Belongs to the NRP synthetase family.

The enzyme catalyses 7beta,14,16-trihydroxyconfertifolin + benzoate + H(+) = dideacetyl astellolide A + H2O. It catalyses the reaction 7beta,14,16-trihydroxyconfertifolin + 4-hydroxybenzoate + H(+) = dideacetyl astellolide B + H2O. It participates in secondary metabolite biosynthesis; terpenoid biosynthesis. In terms of biological role, nonribosomal peptide synthetase; part of the gene cluster that mediates the biosynthesis of astellolides, drimane-type sesquiterpene esters that show antimicrobial, anti-inflammatory, and anti-tumor activities. The first step in astellolide biosynthesis is performed by the sesquiterpene cyclase astC that catalyzes the formation of drimanyl pyrophosphate from farnesyl pyrophosphate. Drimanyl pyrophosphate is then dephosphorylated by the sesquiterpene phosphatase astI to produce drimanyl monophosphate which is further dephosphorylated to drim-8-ene-11-ol by atsK. Drim-8-ene-11-ol is converted to confertifolin, probably by the cytochrome P450 monooxygenase astD and/or the dehydrogenase astE. The cytochrome P450 monooxygenases astB, astF and astJ then hydroxylate confertifolin at C6, C14, or C15 to form trihydroxy confertifolin. The nonribosomal peptide synthetase astA catalyzes ester bond formation between trihydroxy contifolin and benzoic acid (BA) or 4-hydroxy benzoic acid (4HBA), leading to the formation of dideacetyl astellolides A and B, respectively. Finally, the O-acetyltransferase astG converts dideacetyl astellolides A and B into deacetyl astellolides A and B. In Aspergillus oryzae (strain ATCC 42149 / RIB 40) (Yellow koji mold), this protein is Nonribosomal peptide synthetase astA.